The primary structure comprises 124 residues: Large ribosomal subunit protein bL12 (124 aa).

This sequence belongs to the bacterial ribosomal protein bL12 family. Homodimer. Part of the ribosomal stalk of the 50S ribosomal subunit. Forms a multimeric L10(L12)X complex, where L10 forms an elongated spine to which 2 to 4 L12 dimers bind in a sequential fashion. Binds GTP-bound translation factors.

Functionally, forms part of the ribosomal stalk which helps the ribosome interact with GTP-bound translation factors. Is thus essential for accurate translation. The sequence is that of Large ribosomal subunit protein bL12 from Hamiltonella defensa subsp. Acyrthosiphon pisum (strain 5AT).